Reading from the N-terminus, the 271-residue chain is Co-chaperone protein DjlA (271 aa).

Residues 1-6 (MQYWGK) lie on the Periplasmic side of the membrane. The helical transmembrane segment at 7-31 (IIGVAVALLMGGGFWGVVLGLLIGH) threads the bilayer. Over 32–271 (MFDKARSRKM…ELIKQQKGFK (240 aa)) the chain is Cytoplasmic. The 67-residue stretch at 205-271 (DACNVLGVKP…ELIKQQKGFK (67 aa)) folds into the J domain.

Homodimer.

The protein resides in the cell inner membrane. Functionally, regulatory DnaK co-chaperone. Direct interaction between DnaK and DjlA is needed for the induction of the wcaABCDE operon, involved in the synthesis of a colanic acid polysaccharide capsule, possibly through activation of the RcsB/RcsC phosphotransfer signaling pathway. The colanic acid capsule may help the bacterium survive conditions outside the host. In Escherichia coli (strain K12), this protein is Co-chaperone protein DjlA.